Consider the following 414-residue polypeptide: Na(+)-translocating NADH-quinone reductase subunit B (414 aa).

The next 3 helical transmembrane spans lie at 56-76, 129-149, and 164-184; these read IMIM…YNAG, FLPI…LFCM, and ILFA…LGIT. FMN phosphoryl threonine is present on T236. 5 consecutive transmembrane segments (helical) span residues 268 to 288, 297 to 317, 325 to 345, 358 to 378, and 381 to 401; these read IPGS…AMIV, IIAG…VIGS, MPWH…FMAT, WWYG…NPAY, and GMML…HVVI.

It belongs to the NqrB/RnfD family. Composed of six subunits; NqrA, NqrB, NqrC, NqrD, NqrE and NqrF. Requires FMN as cofactor.

The protein resides in the cell inner membrane. The catalysed reaction is a ubiquinone + n Na(+)(in) + NADH + H(+) = a ubiquinol + n Na(+)(out) + NAD(+). Its activity is regulated as follows. This reaction is tightly coupled to the Na(+) pumping activity and specifically requires Na(+) for activity. Inhibited by korormicin and 2-N-heptyl-4-hydroxyquinoline N-oxide (HQNO). NQR complex catalyzes the reduction of ubiquinone-1 to ubiquinol by two successive reactions, coupled with the transport of Na(+) ions from the cytoplasm to the periplasm. NqrA to NqrE are probably involved in the second step, the conversion of ubisemiquinone to ubiquinol. In Vibrio alginolyticus, this protein is Na(+)-translocating NADH-quinone reductase subunit B.